A 171-amino-acid polypeptide reads, in one-letter code: Der GTPase-activating protein YihI (171 aa).

Disordered regions lie at residues 1–99 (MKKP…QAEL) and 145–171 (LSYD…RGGN). A compositionally biased stretch (basic and acidic residues) spans 20–30 (TREELNQEARD). Over residues 31–40 (RKRLKKHRGH) the composition is skewed to basic residues. Residues 147-160 (YDDDEEDDEEDEKQ) are compositionally biased toward acidic residues.

Belongs to the YihI family. Interacts with Der.

In terms of biological role, a GTPase-activating protein (GAP) that modifies Der/EngA GTPase function. May play a role in ribosome biogenesis. This is Der GTPase-activating protein YihI from Salmonella agona (strain SL483).